A 252-amino-acid chain; its full sequence is Ribosomal RNA small subunit methyltransferase J (252 aa).

S-adenosyl-L-methionine contacts are provided by residues 101–102, 117–118, 153–154, and D171; these read RD, ER, and SS.

The protein belongs to the methyltransferase superfamily. RsmJ family.

The protein localises to the cytoplasm. It carries out the reaction guanosine(1516) in 16S rRNA + S-adenosyl-L-methionine = N(2)-methylguanosine(1516) in 16S rRNA + S-adenosyl-L-homocysteine + H(+). Its function is as follows. Specifically methylates the guanosine in position 1516 of 16S rRNA. This chain is Ribosomal RNA small subunit methyltransferase J, found in Salmonella choleraesuis (strain SC-B67).